We begin with the raw amino-acid sequence, 372 residues long: Ciliary neurotrophic factor receptor subunit alpha (372 aa).

Positions 1–22 (MAASVPWACCAVLAAAAAAVYT) are cleaved as a signal peptide. The 78-residue stretch at 27–104 (PQEAPHVQYE…WHLRHQVLLH (78 aa)) folds into the Ig-like C2-type domain. An intrachain disulfide couples Cys46 to Cys89. Residues Asn60, Asn70, Asn142, and Asn190 are each glycosylated (N-linked (GlcNAc...) asparagine). 2 consecutive Fibronectin type-III domains span residues 108–205 (PPRE…VKPD) and 206–306 (PPEN…TEEP). The WSXWS motif motif lies at 290-294 (WSDWS). The interval 301–338 (PWTEEPRHLTTEAQAPETTTSTTSSLAPPPTTKICDPG) is disordered. Residues 311-326 (TEAQAPETTTSTTSSL) are compositionally biased toward low complexity. A lipid anchor (GPI-anchor amidated serine) is attached at Ser342. Residues 343 to 372 (GGGPSILFLTSVPVTLVLAAAAATANNLLI) constitute a propeptide, removed in mature form.

It belongs to the type I cytokine receptor family. Type 3 subfamily. Forms a heterotrimer with LIFR and IL6ST. Interacts with heterodimeric neurotropic cytokine composed of CLCF1/CLC and CRLF1/CLF-1. Either alone or in complex with the heterodimer CLCF1-CRLF1 interacts with SORL1; this interaction may promote internalization and lysosomal degradation.

It localises to the cell membrane. In terms of biological role, binds to CNTF. The alpha subunit provides the receptor specificity. The protein is Ciliary neurotrophic factor receptor subunit alpha (Cntfr) of Mus musculus (Mouse).